Consider the following 665-residue polypeptide: MPIHILPPQLANQIAAGEVVERPASVVKELVENSLDAGATRVDIDIDKGGSKLIRIRDNGSGIPKDELALALSRHATSKVHSLDDLEAILSFGFRGEALASISSVARLTLTSKTAEQTEAWQAHAEGSQMDVSLMPAAHPQGSTIEVVDLFFNTPARRRFLKSDKTEFTHIDEWLKRIAIVRTDIHFSLTHNGKLVRQYRAANTDIQMQQRLSQICGRAFAEQAITLACEHDGLSLEGYIQSPHDNSVTDTNYFYVNGRLVRDKLVNHAVRQAFAEHQWHQQPSYVLKLTLDPHQVDVNVHPAKHEVRFHQSRYVHDFILQALQSALAQFPAKGSQAEYDFEQDNGSLEATAASNPDNGLSPSRGHAEEGDFSNSVAYAANAASVHRGSTSSERKASAGVSQFGRIPSSQGDYQPQDNSRYTPKRYSTNAASTNTASNYSHSTSAPVSRQALEGYAQLLATPEIVSSSNQYVADKNQEFKDVNESGSTPKVAAMPAVLAGQYWVITQGECLRLLPLQAVRLWLRQKEISHKLPTGLVSQPLLMPVAVKADKHWGEILLERESLLRQLGLELTIRYQQLIIKKVPPYLRESQLAVLIPELLQWVEHQVPAIPALSAWLAKHGQKHEQSLTDTWEGFCLLSEPEQQVLLEKAKVLPWQAWLEESQSE.

Composition is skewed to polar residues over residues 348 to 361 (LEATAASNPDNGLS) and 407 to 421 (PSSQGDYQPQDNSRY). Disordered regions lie at residues 348–370 (LEATAASNPDNGLSPSRGHAEEG) and 385–445 (VHRG…STSA). Over residues 426-445 (YSTNAASTNTASNYSHSTSA) the composition is skewed to low complexity.

It belongs to the DNA mismatch repair MutL/HexB family.

Functionally, this protein is involved in the repair of mismatches in DNA. It is required for dam-dependent methyl-directed DNA mismatch repair. May act as a 'molecular matchmaker', a protein that promotes the formation of a stable complex between two or more DNA-binding proteins in an ATP-dependent manner without itself being part of a final effector complex. This chain is DNA mismatch repair protein MutL, found in Shewanella denitrificans (strain OS217 / ATCC BAA-1090 / DSM 15013).